Reading from the N-terminus, the 412-residue chain is Tyrosine--tRNA ligase (412 aa).

Position 31 (Y31) interacts with L-tyrosine. The 'HIGH' region signature appears at 36–45 (PTAPSLHIGH). Residues Y162 and Q166 each contribute to the L-tyrosine site. Residues 222 to 226 (KIGKT) carry the 'KMSKS' region motif. K225 is an ATP binding site. In terms of domain architecture, S4 RNA-binding spans 345-412 (KRWLDVVVQL…KKKKQVIDLN (68 aa)).

It belongs to the class-I aminoacyl-tRNA synthetase family. TyrS type 1 subfamily. Homodimer.

It localises to the cytoplasm. The catalysed reaction is tRNA(Tyr) + L-tyrosine + ATP = L-tyrosyl-tRNA(Tyr) + AMP + diphosphate + H(+). Its function is as follows. Catalyzes the attachment of tyrosine to tRNA(Tyr) in a two-step reaction: tyrosine is first activated by ATP to form Tyr-AMP and then transferred to the acceptor end of tRNA(Tyr). The chain is Tyrosine--tRNA ligase from Chlamydia muridarum (strain MoPn / Nigg).